A 367-amino-acid chain; its full sequence is Tubulin-like protein CetZ (367 aa).

Residues 11-15 (QCGNR), Ser-111, 115-117 (GTG), Glu-148, Asn-176, and Asn-194 each bind GTP.

Belongs to the CetZ family.

The protein resides in the cytoplasm. Involved in cell shape control. The sequence is that of Tubulin-like protein CetZ from Methanothrix thermoacetophila (strain DSM 6194 / JCM 14653 / NBRC 101360 / PT) (Methanosaeta thermophila).